The sequence spans 414 residues: Serine/threonine transporter SstT (414 aa).

The next 8 membrane-spanning stretches (helical) occupy residues glycine 22–phenylalanine 42, isoleucine 54–alanine 74, isoleucine 89–phenylalanine 109, alanine 148–leucine 168, isoleucine 189–leucine 209, leucine 223–valine 243, methionine 305–leucine 325, and isoleucine 337–isoleucine 357.

It belongs to the dicarboxylate/amino acid:cation symporter (DAACS) (TC 2.A.23) family.

The protein localises to the cell inner membrane. It carries out the reaction L-serine(in) + Na(+)(in) = L-serine(out) + Na(+)(out). It catalyses the reaction L-threonine(in) + Na(+)(in) = L-threonine(out) + Na(+)(out). Functionally, involved in the import of serine and threonine into the cell, with the concomitant import of sodium (symport system). This chain is Serine/threonine transporter SstT, found in Haemophilus influenzae (strain PittGG).